Consider the following 1284-residue polypeptide: DNA topoisomerase 2, mitochondrial (1284 aa).

Residues 1–35 (MSKLLNNNNHKNLTNYLKFGKGIINNLNNKSKQVG) constitute a mitochondrion transit peptide. Residues Asn183, Asn212, 240-242 (GSN), and 253-260 (GRNGFGAK) contribute to the ATP site. The interaction with DNA stretch occupies residues 445-447 (KKK). 478-480 (QSK) lines the ATP pocket. A Toprim domain is found at 560–677 (CTLIITEGDS…NLLKRGFLVE (118 aa)). Glu566, Asp646, and Asp648 together coordinate Mg(2+). In terms of domain architecture, Topo IIA-type catalytic spans 810-1232 (IPSLIDGLKP…DPKSLWTADL (423 aa)). The O-(5'-phospho-DNA)-tyrosine intermediate role is filled by Tyr900. The interval 1245 to 1284 (EFQKKPLKTSSSSSFDVSSSSESAKLSSTRKSKTDKIKSK) is disordered. Residues 1254 to 1271 (SSSSSFDVSSSSESAKLS) are compositionally biased toward low complexity.

The protein belongs to the type II topoisomerase family. In terms of assembly, homodimer. Mg(2+) serves as cofactor. Requires Mn(2+) as cofactor. Ca(2+) is required as a cofactor.

The protein localises to the mitochondrion. The enzyme catalyses ATP-dependent breakage, passage and rejoining of double-stranded DNA.. Its function is as follows. Control of topological states of DNA by transient breakage and subsequent rejoining of DNA strands. Topoisomerase II makes double-strand breaks. This chain is DNA topoisomerase 2, mitochondrial (top2mt), found in Dictyostelium discoideum (Social amoeba).